Reading from the N-terminus, the 404-residue chain is Nesprin-4 (404 aa).

Disordered stretches follow at residues 1-91 and 277-347; these read MALS…GGKH and GQRG…GAPD. The Cytoplasmic portion of the chain corresponds to 1 to 355; that stretch reads MALSLPLGPR…PDPASRQPLT (355 aa). Polar residues predominate over residues 39–52; it reads EESTSPEQAQTLGQ. Basic residues predominate over residues 307–320; sequence HQKRLARHQRHSLL. The 58-residue stretch at 347–404 folds into the KASH domain; that stretch reads DPASRQPLTFLLILFLLFLLLVGAMFLLPASGGPCCSHARIPRTPYLVLSYVNGLPPV. A helical; Anchor for type IV membrane protein transmembrane segment spans residues 356 to 376; sequence FLLILFLLFLLLVGAMFLLPA. The Perinuclear space portion of the chain corresponds to 377-404; it reads SGGPCCSHARIPRTPYLVLSYVNGLPPV.

This sequence belongs to the nesprin family. In terms of assembly, core component of LINC complexes which are composed of inner nuclear membrane SUN domain-containing proteins coupled to outer nuclear membrane KASH domain-containing nesprins. SUN and KASH domain-containing proteins seem to bind each other promiscuously; however, differentially expression of LINC complex constituents can give rise to specific assemblies. Probably part of a SUN1-containing LINC complex. Interacts with kinesins KIF5B and KLC1. In terms of processing, the disulfid bond with SUN1 or SUN2 is required for stability of the respective LINC complex under tensile forces.

The protein resides in the nucleus outer membrane. Its function is as follows. As a component of the LINC (LInker of Nucleoskeleton and Cytoskeleton) complex, involved in the connection between the nuclear lamina and the cytoskeleton. The nucleocytoplasmic interactions established by the LINC complex play an important role in the transmission of mechanical forces across the nuclear envelope and in nuclear movement and positioning. Behaves as a kinesin cargo, providing a functional binding site for kinesin-1 at the nuclear envelope. Hence may contribute to the establishment of secretory epithelial morphology by promoting kinesin-dependent apical migration of the centrosome and Golgi apparatus and basal localization of the nucleus. The polypeptide is Nesprin-4 (SYNE4) (Homo sapiens (Human)).